Here is a 476-residue protein sequence, read N- to C-terminus: Amino acid permease 3 (476 aa).

Over 1–33 the chain is Cytoplasmic; sequence MVQNHQTVLAVDMPQTGGSKYLDDDGKNKRTGS. Residues 34–54 form a helical membrane-spanning segment; sequence VWTASAHIITAVIGSGVLSLA. At 55–57 the chain is on the extracellular side; sequence WAT. The chain crosses the membrane as a helical span at residues 58 to 78; it reads AQLGWLAGPVVMLLFSAVTYF. Topologically, residues 79-122 are cytoplasmic; that stretch reads TSSLLAACYRSGDPISGKRNYTYMDAVRSNLGGVKVTLCGIVQY. Residues 123-143 form a helical membrane-spanning segment; the sequence is LNIFGVAIGYTIASAISMMAI. Residues 144–166 lie on the Extracellular side of the membrane; it reads KRSNCFHKSGGKDPCHMNSNPYM. 2 helical membrane-spanning segments follow: residues 167-187 and 188-208; these read IAFG…QLWW and LSIL…ALGI. At 209–277 the chain is on the extracellular side; the sequence is AQVVVNGKVK…EEKTMKKATL (69 aa). Residues 278 to 298 form a helical membrane-spanning segment; that stretch reads VSVSVTTMFYMLCGCMGYAAF. Residues 299–300 are Cytoplasmic-facing; it reads GD. Residues 301 to 321 form a helical membrane-spanning segment; that stretch reads LSPGNLLTGFGFYNPYWLLDI. Topologically, residues 322 to 324 are extracellular; that stretch reads ANA. A helical transmembrane segment spans residues 325–345; sequence AIVIHLIGAYQVYCQPLFAFI. Topologically, residues 346–384 are cytoplasmic; sequence EKQASIQFPDSEFIAKDIKIPIPGFKPLRLNVFRLIWRT. The next 2 membrane-spanning stretches (helical) occupy residues 385-405 and 406-426; these read VFVI…DVVG and LLGA…MYIA. At 427-441 the chain is on the cytoplasmic side; sequence QKKIPRWSTRWVCLQ. Residues 442-462 form a helical membrane-spanning segment; that stretch reads VFSLGCLVVSIAAAAGSIAGV. Residues 463 to 476 lie on the Extracellular side of the membrane; it reads LLDLKSYKPFRSEY.

It belongs to the amino acid/polyamine transporter 2 family. Amino acid/auxin permease (AAAP) (TC 2.A.18.2) subfamily. Expressed in the root phloem. Detected in stamens, in cotyledons, and in major veins of mature leaves.

Its subcellular location is the cell membrane. It localises to the nucleus membrane. The protein localises to the endomembrane system. Its activity is regulated as follows. Inhibited by carbonylcyanide m-chlorophenylhydrazone and 2,4-dinitrophenol. Functionally, amino acid-proton symporter. Stereospecific transporter with a broad specificity for GABA, tryptophan and both neutral and basic amino acids. High affinity transport of cationic amino acids. The chain is Amino acid permease 3 (AAP3) from Arabidopsis thaliana (Mouse-ear cress).